A 273-amino-acid polypeptide reads, in one-letter code: Probable NAD(P)H dehydrogenase (quinone) FQR1-like 2 (273 aa).

The interval methionine 1 to proline 60 is disordered. Over residues threonine 49–proline 60 the composition is skewed to low complexity. The 189-residue stretch at isoleucine 75–methionine 263 folds into the Flavodoxin-like domain. Residues serine 81–histidine 85, phenylalanine 183–glycine 236, and histidine 207 contribute to the FMN site. Residue tyrosine 83 participates in NAD(+) binding.

This sequence belongs to the WrbA family. The cofactor is FMN.

The protein localises to the cell membrane. It catalyses the reaction a quinone + NADH + H(+) = a quinol + NAD(+). It carries out the reaction a quinone + NADPH + H(+) = a quinol + NADP(+). Catalyzes the transfer of electrons from NADH and NADPH to reduce quinone to the hydroquinone state. The chain is Probable NAD(P)H dehydrogenase (quinone) FQR1-like 2 from Arabidopsis thaliana (Mouse-ear cress).